A 215-amino-acid chain; its full sequence is High mobility group protein B1 (215 aa).

1 to 10 provides a ligand contact to heparin; it reads MGKGDPKKPR. The interval 1 to 97 is sufficient for interaction with HAVCR2; the sequence is MGKGDPKKPR…KFKDPNAPKR (97 aa). N6-acetyllysine occurs at positions 3, 7, 8, and 12. The interval 3-15 is LPS binding (delipidated); that stretch reads KGDPKKPRGKMSS. The HMG box 1 DNA-binding region spans 9–79; sequence PRGKMSSYAF…RYEREMKTYI (71 aa). Residue Cys23 is modified to Cysteine sulfonic acid (-SO3H); alternate. Cysteines 23 and 45 form a disulfide. The tract at residues 27-43 is NLS 1; the sequence is HKKKHPDASVNFSEFSK. The short motif at 27-43 is the Nuclear localization signal (NLS) 1 element; the sequence is HKKKHPDASVNFSEFSK. 3 positions are modified to N6-acetyllysine: Lys28, Lys29, and Lys30. An Isoglutamyl lysine isopeptide (Lys-Gln) (interchain with Q-?) cross-link involves residue Lys28. At Ser35 the chain carries Phosphoserine. Position 43 is an N6-acetyllysine (Lys43). Isoglutamyl lysine isopeptide (Lys-Gln) (interchain with Q-?) cross-links involve residues Lys43 and Lys44. The residue at position 45 (Cys45) is a Cysteine sulfonic acid (-SO3H); alternate. Lys68 participates in a covalent cross-link: Isoglutamyl lysine isopeptide (Lys-Gln) (interchain with Q-?). The tract at residues 76-95 is disordered; it reads KTYIPPKGETKKKFKDPNAP. An LPS binding (Lipid A) region spans residues 80 to 96; that stretch reads PPKGETKKKFKDPNAPK. Over residues 83–94 the composition is skewed to basic and acidic residues; the sequence is GETKKKFKDPNA. Positions 89–108 are cytokine-stimulating activity; sequence FKDPNAPKRPPSAFFLFCSE. Lys90 is subject to N6-acetyllysine. Residues 95–163 constitute a DNA-binding region (HMG box 2); that stretch reads PKRPPSAFFL…KYEKDIAAYR (69 aa). Ser100 carries the post-translational modification Phosphoserine. Position 106 is a cysteine sulfonic acid (-SO3H) (Cys106). N6-acetyllysine is present on residues Lys127, Lys128, Lys141, Lys172, Lys173, Lys177, and Lys180. The interval 150–183 is binding to AGER/RAGE; sequence KLKEKYEKDIAAYRAKGKPDAAKKGVVKAEKSKK. Residues 161–179 are compositionally biased toward basic and acidic residues; it reads AYRAKGKPDAAKKGVVKAE. The disordered stretch occupies residues 161-215; it reads AYRAKGKPDAAKKGVVKAEKSKKKKEEEDDEEDEEDEEEEEEEEDEDEEEDDDDE. Positions 178 to 184 are NLS 2; it reads AEKSKKK. Residues 178–184 carry the Nuclear localization signal (NLS) 2 motif; it reads AEKSKKK. Lys180 is covalently cross-linked (Isoglutamyl lysine isopeptide (Lys-Gln) (interchain with Q-?)). Ser181 is modified (ADP-ribosylserine). N6-acetyllysine occurs at positions 182, 183, 184, and 185. Isoglutamyl lysine isopeptide (Lys-Gln) (interchain with Q-?) cross-links involve residues Lys182, Lys183, and Lys184. A compositionally biased stretch (acidic residues) spans 187 to 215; that stretch reads EEDDEEDEEDEEEEEEEEDEDEEEDDDDE.

Belongs to the HMGB family. Interacts (fully reduced HMGB1) with CXCL12; probably in a 1:2 ratio involving two molecules of CXCL12, each interacting with one HMG box of HMGB1; inhibited by glycyrrhizin. Associates with the TLR4:LY96 receptor complex. Component of the RAG complex composed of core components RAG1 and RAG2, and associated component HMGB1 or HMGB2. Interacts (in cytoplasm upon starvation) with BECN1; inhibits the interaction of BECN1 and BCL2 leading to promotion of autophagy. Interacts with KPNA1; involved in nuclear import. Interacts with SREBF1, TLR2, TLR4, TLR9, APEX1, FEN1, POLB, TERT. Interacts with AGER, PTPRZ1, IL1B, MSH2, XPA, XPC, HNF1A, TP53. Interacts with CD24; the probable CD24:SIGLEC10 complex is proposed to inhibit HGMB1-mediated tissue damage immune response. Interacts with THBD; prevents HGMB1 interaction with ACER/RAGE and inhibits HGMB1 pro-inflammatory activity. Interacts with HAVCR2; impairs HMGB1 binding to B-DNA and likely HMGB1-mediated innate immune response. Interacts with XPO1; mediating nuclear export. Interacts with receptor RAGE/AGER. In terms of processing, acetylated on multiple sites upon stimulation with LPS. Acetylation on lysine residues in the nuclear localization signals (NLS 1 and NLS 2) leads to cytoplasmic localization and subsequent secretion. Acetylation on Lys-3 results in preferential binding to DNA ends and impairs DNA bending activity. Post-translationally, phosphorylated at serine residues. Phosphorylation in both NLS regions is required for cytoplasmic translocation followed by secretion. Reduction/oxidation of cysteine residues Cys-23, Cys-45 and Cys-106 and a possible intramolecular disulfide bond involving Cys-23 and Cys-45 give rise to different redox forms with specific functional activities in various cellular compartments: 1- Fully reduced HGMB1 (HMGB1C23hC45hC106h), 2- Disulfide HMGB1 (HMGB1C23-C45C106h) and 3- Sulfonyl HMGB1 (HMGB1C23soC45soC106so). In terms of processing, poly-ADP-ribosylated by PARP1 when secreted following stimulation with LPS. Post-translationally, in vitro cleavage by CASP1 is liberating a HMG box 1-containing peptide which may mediate immunogenic activity; the peptide antagonizes apoptosis-induced immune tolerance. Can be proteolytically cleaved by a thrombin:thrombomodulin complex; reduces binding to heparin and pro-inflammatory activities. Forms covalent cross-links mediated by transglutaminase TGM2, between a glutamine and the epsilon-amino group of a lysine residue, forming homopolymers and heteropolymers. As to expression, serum levels are found elevated in mice with modeled systemic lupus erythematosus (SLE) and are correlated with SLE disease activity.

It localises to the nucleus. Its subcellular location is the cytoplasm. The protein resides in the chromosome. It is found in the cell membrane. The protein localises to the endosome. It localises to the endoplasmic reticulum-Golgi intermediate compartment. Its subcellular location is the secreted. Multifunctional redox sensitive protein with various roles in different cellular compartments. In the nucleus is one of the major chromatin-associated non-histone proteins and acts as a DNA chaperone involved in replication, transcription, chromatin remodeling, V(D)J recombination, DNA repair and genome stability. Proposed to be an universal biosensor for nucleic acids. Promotes host inflammatory response to sterile and infectious signals and is involved in the coordination and integration of innate and adaptive immune responses. In the cytoplasm functions as a sensor and/or chaperone for immunogenic nucleic acids implicating the activation of TLR9-mediated immune responses, and mediates autophagy. Acts as a danger associated molecular pattern (DAMP) molecule that amplifies immune responses during tissue injury. Released to the extracellular environment can bind DNA, nucleosomes, IL-1 beta, CXCL12, AGER isoform 2/sRAGE, lipopolysaccharide (LPS) and lipoteichoic acid (LTA), and activates cells through engagement of multiple surface receptors. In the extracellular compartment fully reduced HMGB1 (released by necrosis) acts as a chemokine, disulfide HMGB1 (actively secreted) as a cytokine, and sulfonyl HMGB1 (released from apoptotic cells) promotes immunological tolerance. Has proangiogenic activity. May be involved in platelet activation. Binds to phosphatidylserine and phosphatidylethanolamide. Bound to RAGE mediates signaling for neuronal outgrowth. May play a role in accumulation of expanded polyglutamine (polyQ) proteins. In terms of biological role, nuclear functions are attributed to fully reduced HGMB1. Associates with chromatin and binds DNA with a preference to non-canonical DNA structures such as single-stranded DNA, DNA-containing cruciforms or bent structures, supercoiled DNA and ZDNA. Can bent DNA and enhance DNA flexibility by looping thus providing a mechanism to promote activities on various gene promoters by enhancing transcription factor binding and/or bringing distant regulatory sequences into close proximity. May be involved in nucleotide excision repair (NER), mismatch repair (MMR) and base excision repair (BER) pathways, and double strand break repair such as non-homologous end joining (NHEJ). Involved in V(D)J recombination by acting as a cofactor of the RAG complex: acts by stimulating cleavage and RAG protein binding at the 23 bp spacer of conserved recombination signal sequences (RSS). In vitro can displace histone H1 from highly bent DNA. Can restructure the canonical nucleosome leading to relaxation of structural constraints for transcription factor-binding. Enhances binding of sterol regulatory element-binding proteins (SREBPs) such as SREBF1 to their cognate DNA sequences and increases their transcriptional activities. Facilitates binding of TP53 to DNA. Proposed to be involved in mitochondrial quality control and autophagy in a transcription-dependent fashion implicating HSPB1; however, this function has been questioned. Can modulate the activity of the telomerase complex and may be involved in telomere maintenance. Its function is as follows. In the cytoplasm proposed to dissociate the BECN1:BCL2 complex via competitive interaction with BECN1 leading to autophagy activation. Can protect BECN1 and ATG5 from calpain-mediated cleavage and thus proposed to control their proautophagic and proapoptotic functions and to regulate the extent and severity of inflammation-associated cellular injury. In myeloid cells has a protective role against endotoxemia and bacterial infection by promoting autophagy. Involved in endosomal translocation and activation of TLR9 in response to CpG-DNA in macrophages. Functionally, in the extracellular compartment (following either active secretion or passive release) involved in regulation of the inflammatory response. Fully reduced HGMB1 (which subsequently gets oxidized after release) in association with CXCL12 mediates the recruitment of inflammatory cells during the initial phase of tissue injury; the CXCL12:HMGB1 complex triggers CXCR4 homodimerization. Induces the migration of monocyte-derived immature dendritic cells and seems to regulate adhesive and migratory functions of neutrophils implicating AGER/RAGE and ITGAM. Can bind to various types of DNA and RNA including microbial unmethylated CpG-DNA to enhance the innate immune response to nucleic acids. Proposed to act in promiscuous DNA/RNA sensing which cooperates with subsequent discriminative sensing by specific pattern recognition receptors. Promotes extracellular DNA-induced AIM2 inflammasome activation implicating AGER/RAGE. Disulfide HMGB1 binds to transmembrane receptors, such as AGER/RAGE, TLR2, TLR4 and probably TREM1, thus activating their signal transduction pathways. Mediates the release of cytokines/chemokines such as TNF, IL-1, IL-6, IL-8, CCL2, CCL3, CCL4 and CXCL10. Promotes secretion of interferon-gamma by macrophage-stimulated natural killer (NK) cells in concert with other cytokines like IL-2 or IL-12. TLR4 is proposed to be the primary receptor promoting macrophage activation and signaling through TLR4 seems to implicate LY96/MD-2. In bacterial LPS- or LTA-mediated inflammatory responses binds to the endotoxins and transfers them to CD14 for signaling to the respective TLR4:LY96 and TLR2 complexes. Contributes to tumor proliferation by association with ACER/RAGE. Can bind to IL1-beta and signals through the IL1R1:IL1RAP receptor complex. Binding to class A CpG activates cytokine production in plasmacytoid dendritic cells implicating TLR9, MYD88 and AGER/RAGE and can activate autoreactive B cells. Via HMGB1-containing chromatin immune complexes may also promote B cell responses to endogenous TLR9 ligands through a B-cell receptor (BCR)-dependent and ACER/RAGE-independent mechanism. Inhibits phagocytosis of apoptotic cells by macrophages; the function is dependent on poly-ADP-ribosylation and involves binding to phosphatidylserine on the cell surface of apoptotic cells. In adaptive immunity may be involved in enhancing immunity through activation of effector T-cells and suppression of regulatory T (TReg) cells. In contrast, without implicating effector or regulatory T-cells, required for tumor infiltration and activation of T-cells expressing the lymphotoxin LTA:LTB heterotrimer thus promoting tumor malignant progression. Also reported to limit proliferation of T-cells. Released HMGB1:nucleosome complexes formed during apoptosis can signal through TLR2 to induce cytokine production. Involved in induction of immunological tolerance by apoptotic cells; its pro-inflammatory activities when released by apoptotic cells are neutralized by reactive oxygen species (ROS)-dependent oxidation specifically on Cys-106. During macrophage activation by activated lymphocyte-derived self apoptotic DNA (ALD-DNA) promotes recruitment of ALD-DNA to endosomes. The sequence is that of High mobility group protein B1 (Hmgb1) from Mus musculus (Mouse).